The following is a 952-amino-acid chain: MSVPNSSNKQTCFTARHIGPNSEDVATMLAVIGVESLDDLAAKAVPSDILDNVTDTGVAPGLDRLPPPATESETLAELGALARANTVAVSMIGQGYYDTLTPAVLSRNILENPAWYTPYTPYQPEISQGRLEALLNFQTLVSDLTGLEIANASMLDEGTAAAEAMTLMYRAARSTASRVVVDVDVFAQTVAVFATRAKPLGIDIVVADLREGLPDGEFFGVITQLPGASGRITDWTALIAQAHSRGALVAVGADLLALTLITPPGEIGADVAFGTTQRFGVPMGFGGPHAGYLALHTKHARQLPGRLVGVSVDSDGTPAYRLALQTREQHIRRDKATSNICTAQVLLAVMAAMYASYHGAEGLTGIARRVHAQARALAAGLSAAGVEVVHQAFFDTVLARVPGRTVQIQGAAKERGINVWLVDGDHVSVACDEATTDEHITAVLAAFAATPARASFAGPDIATRTSAFLTHPTFTKYRTETSMMRYLRALADKDIALDRSMIPLGSCTMKLNAAAEMESITWQEFTRQHPFAPVSDTPGLRRLISDLESWLVQITGYDAVSLQPNAGSQGEYAGLLAIHDYHVSRGEPHRNVCLIPSSAHGTNAASAALVGMRVVVVGCHDNGDVDLDDLRIKLSEHANRLSVLMITYPSTHGVYEHDIAEICAAVHDAGGQVYVDGANLNALVGLARPGKFGGDVSHLNLHKTFCIPHGGGGPGVGPVAVRSHLVSFLPGHPFAPELPQGQPVSSAPYGSASLLPITWAYIRMMGADGLRTASLTAIASANYIARRLDKYFPVLYTGENGMVAHECILDLRPITKSVGVTVDDVAKRLADYGFHAPTMSFPVPGTLMVEPTESESLAEIDAFCEAMIAIRGEIARVGAGEWSVEDNPLRGAPHTAECLLASDWDHPYTREEAAYPLGKAFRPKVWPPVRRIDGVYGDRNLVCSCLPVEAFV.

An N6-(pyridoxal phosphate)lysine modification is found at Lys-703.

The protein belongs to the GcvP family. In terms of assembly, the glycine cleavage system is composed of four proteins: P, T, L and H. It depends on pyridoxal 5'-phosphate as a cofactor.

It carries out the reaction N(6)-[(R)-lipoyl]-L-lysyl-[glycine-cleavage complex H protein] + glycine + H(+) = N(6)-[(R)-S(8)-aminomethyldihydrolipoyl]-L-lysyl-[glycine-cleavage complex H protein] + CO2. Functionally, the glycine cleavage system catalyzes the degradation of glycine. The P protein binds the alpha-amino group of glycine through its pyridoxal phosphate cofactor; CO(2) is released and the remaining methylamine moiety is then transferred to the lipoamide cofactor of the H protein. The polypeptide is Glycine dehydrogenase (decarboxylating) (Mycobacterium leprae (strain Br4923)).